We begin with the raw amino-acid sequence, 417 residues long: Solute carrier family 25 member 46-A (417 aa).

Basic and acidic residues predominate over residues 1–13 (MQPRRPDRFDGLE). A disordered region spans residues 1-90 (MQPRRPDRFD…AFGEENSNSA (90 aa)). Residues 31–41 (SSFPARSFSSS) are compositionally biased toward low complexity. The stretch at 95–186 (QLNRFAGFGI…GILSEFTHLP (92 aa)) is one Solcar 1 repeat. A run of 6 helical transmembrane segments spans residues 102–122 (FGIG…CIVL), 162–182 (MGST…LSEF), 198–218 (IGGH…FYSA), 257–277 (LLPL…HYIV), 313–333 (FPEL…LYPL), and 382–402 (LGFY…AIVL). Residues 310 to 415 (EDYFPELIAN…KIIYSSVVQT (106 aa)) form a Solcar 2 repeat.

This sequence belongs to the mitochondrial carrier (TC 2.A.29) family.

It localises to the mitochondrion outer membrane. In terms of biological role, may play a role in mitochondrial dynamics by controlling mitochondrial membrane fission. The protein is Solute carrier family 25 member 46-A (slc25a46-a) of Xenopus laevis (African clawed frog).